Here is a 478-residue protein sequence, read N- to C-terminus: Elongation factor Tu, chloroplastic (478 aa).

Over residues 1–29 the composition is skewed to low complexity; that stretch reads MASISAATATSSTKLVSSNSTNPLLPSST. Positions 1 to 31 are disordered; that stretch reads MASISAATATSSTKLVSSNSTNPLLPSSTKP. The transit peptide at 1-69 directs the protein to the chloroplast; it reads MASISAATAT…THRHRRFTVR (69 aa). Residues 79–283 form the tr-type G domain; the sequence is KPHVNIGTIG…AVDSYIPIPV (205 aa). The G1 stretch occupies residues 88 to 95; that stretch reads GHVDHGKT. 88-95 contributes to the GTP binding site; sequence GHVDHGKT. Positions 129 to 133 are G2; the sequence is GITIN. A G3 region spans residues 150–153; sequence DCPG. Residues 150–154 and 205–208 contribute to the GTP site; these read DCPGH and NKQD. A G4 region spans residues 205-208; that stretch reads NKQD. The G5 stretch occupies residues 243-245; sequence SAL.

Belongs to the TRAFAC class translation factor GTPase superfamily. Classic translation factor GTPase family. EF-Tu/EF-1A subfamily.

The protein resides in the plastid. The protein localises to the chloroplast. This protein promotes the GTP-dependent binding of aminoacyl-tRNA to the A-site of ribosomes during protein biosynthesis. This is Elongation factor Tu, chloroplastic (TUFA) from Nicotiana tabacum (Common tobacco).